Consider the following 197-residue polypeptide: Phosphoheptose isomerase (197 aa).

An SIS domain is found at 36 to 197 (MVNALLNEGK…IDSQLFGSEE (162 aa)). 51–53 (NGG) provides a ligand contact to substrate. Residues His60 and Glu64 each coordinate Zn(2+). Substrate is bound by residues Glu64, 93 to 94 (ND), 119 to 121 (STS), Ser124, and Gln174. The Zn(2+) site is built by Gln174 and His182.

The protein belongs to the SIS family. GmhA subfamily. Homotetramer. Zn(2+) serves as cofactor.

It localises to the cytoplasm. The catalysed reaction is 2 D-sedoheptulose 7-phosphate = D-glycero-alpha-D-manno-heptose 7-phosphate + D-glycero-beta-D-manno-heptose 7-phosphate. It functions in the pathway carbohydrate biosynthesis; D-glycero-D-manno-heptose 7-phosphate biosynthesis; D-glycero-alpha-D-manno-heptose 7-phosphate and D-glycero-beta-D-manno-heptose 7-phosphate from sedoheptulose 7-phosphate: step 1/1. In terms of biological role, catalyzes the isomerization of sedoheptulose 7-phosphate in D-glycero-D-manno-heptose 7-phosphate. This Pseudomonas putida (strain W619) protein is Phosphoheptose isomerase.